The following is a 336-amino-acid chain: HTH-type transcriptional regulator AscG (336 aa).

Residues threonine 2–alanine 56 form the HTH lacI-type domain. A DNA-binding region (H-T-H motif) is located at residues methionine 4–serine 23.

In terms of biological role, repressor of the asc operon. The cryptic operon is activated by the insertion of IS186 into the ascG gene. This Escherichia coli (strain K12) protein is HTH-type transcriptional regulator AscG (ascG).